Here is a 518-residue protein sequence, read N- to C-terminus: Sensor protein kinase HptS (518 aa).

The next 2 helical transmembrane spans lie at 20–40 (IFPV…IYIW) and 222–242 (GITL…FGFI). A Histidine kinase domain is found at 297–513 (EQLIHSIEHT…LICYKIPLSR (217 aa)). Phosphohistidine; by autocatalysis is present on histidine 325.

Autophosphorylated.

It is found in the cell membrane. It carries out the reaction ATP + protein L-histidine = ADP + protein N-phospho-L-histidine.. Member of the two-component regulatory system HptS/HptR that regulates genes involved in hexose phosphate transport system in response to changes in extracellular phosphate sources. May act as a sensor protein kinase which is autophosphorylated at a histidine residue and transfers its phosphate group to the conserved aspartic acid residue in the regulatory domain of HptS. In turn, HptS antagonizes CcpA-dependent transcription of a subset of CcpA-regulated genes involved in antibiotic susceptibility. This is Sensor protein kinase HptS (hptS) from Staphylococcus aureus (strain MSSA476).